A 1151-amino-acid chain; its full sequence is MSTWQLFPDSSGDGFRWEVAGRILQSVSDSTPTKALESTAPLPSMADLLLQGCSKLIAREEAMPGEIPMFRTGLGKSVVLKESSIAKAKSILAEKVTYSDLRNTNCSIPQMRQVDTAETLPMFRTASGKSVPLKESSIAKAMSILGSDKIIDSDNVLPRESGFGVSNSLFQTASNKKVNVSSAGLARAKALLGLEEDDLNGFNHVNQSSSSSQQHGWSGLKTHEEFDATVVKHHSGTPGQYEDYVSGKRSEVLNPSLKVPPTKFQTAGGKSLSVSAEALKRARNLLGDPELGSFFDDVAGGDQFFTPEKDERLSDIAINNGSANRGYIAHEEKTSNKHTPNSFVSPLWSSSKQFSSVNLENLASGGNLIKKFDAAVDETDCALNATHGLSNNRSLASDMAVNNSKVNGFIPRGRQPGRPADQPLVDITNRRDTAYAYNKQDSTQKKRLGKTVSVSPFKRPRISSFKTPSKKHALQASSGLSVVSCDTLTSKKVLSTRYPEKSPRVYIKDFFGMHPTATTRMDYVPDHVRRIKSSNADKYVFCDESSSNKVGAETFLQMLAESGASLQHASRKWVTNHYRWIVWKLACYDIYYPAKCRGNFLTITNVLEELKYRYEREVNHGHCSAIKRILSGDAPASSMMVLCISAINPKTDNDSQEAHCSDSCSNVKVELTDGWYSMNAALDVVLTKQLNAGKLFVGQKLRILGAGLSGWATPTSPLEAVISSTICLLLNINGTYRAHWADRLGFCKEIGVPLALNCIKCNGGPVPKTLAGIKRIYPILYKERLGEKKSIVRSERIESRIIQLHNQRRSALVEGIMCEYQRGINGVHSQNDTDSEEGAKIFKLLETAAEPEFLMAEMSPEQLRSFTTYKAKFEAAQQMRKEKSVAETLEDAGLGERNVTPFMRIRLVGLTSLSYEGEHNPKEGIVTIWDPTERQRTELTEGKIYMMKGLVPINSDSEILYLHARGSSSRWQPLSPKDSENFQPFFNPRKPISLSNLGEIPLSSEFDIAAYVVYVGNAYTDVLQKKQWVFVTDGSAQHSGEISNSLLAISFSTSFMDDSSVSHISHNLVGSVVGFCNLIKRAKDVTNEIWVAEAAENSVYFINAEAAYSSHLKTSSAHIQTWAKLSSSKSVIHELRQRVLSIIGACKSPSC.

4 BRCA2 repeats span residues 63-97 (MPGE…EKVT), 116-150 (TAET…SDKI), 163-197 (FGVS…LEED), and 257-291 (LKVP…DPEL). The tract at residues 408–427 (GFIPRGRQPGRPADQPLVDI) is disordered.

As to quaternary structure, interacts with RAD51 and DMC1. Interacts with DSS1(I). As to expression, expressed in flower buds.

Functionally, involved in double-strand break repair and/or homologous recombination by mediating RAD51- and DMC1-facilitated DNA repair. Plays an essential role in both somatic and meiotic homologous recombination. Is crucial for the formation of RAD51 and DMC1 foci during male meiotic homologous recombination in prophase I. This is Protein BREAST CANCER SUSCEPTIBILITY 2 homolog A from Arabidopsis thaliana (Mouse-ear cress).